Here is a 186-residue protein sequence, read N- to C-terminus: Ribosome-recycling factor (186 aa).

This sequence belongs to the RRF family.

The protein resides in the cytoplasm. Functionally, responsible for the release of ribosomes from messenger RNA at the termination of protein biosynthesis. May increase the efficiency of translation by recycling ribosomes from one round of translation to another. The polypeptide is Ribosome-recycling factor (Chlorobium limicola (strain DSM 245 / NBRC 103803 / 6330)).